The chain runs to 495 residues: Type-1 histone deacetylase 1 (495 aa).

Position 94 (Asp-94) interacts with substrate. Residue His-136 is the Proton acceptor of the active site. Residue Gly-144 participates in substrate binding. Residues Asp-171, His-173, and Asp-259 each coordinate a divalent metal cation. Tyr-298 contacts substrate. Residues 372–495 are disordered; sequence PAAAHHDIPP…EDADVDMDSG (124 aa). Basic and acidic residues predominate over residues 396 to 413; sequence DVRISEADRDKKVHHQGE. Polar residues predominate over residues 425–443; it reads NYSNGLEATSTSRRNQVSI. Low complexity predominate over residues 454–480; it reads NSRNNNNNNNNNNNNNNNNNNNSNNNN.

Belongs to the histone deacetylase family. HD type 1 subfamily.

The protein localises to the nucleus. It localises to the cytoplasm. The catalysed reaction is N(6)-acetyl-L-lysyl-[histone] + H2O = L-lysyl-[histone] + acetate. Responsible for the deacetylation of lysine residues on the N-terminal part of the core histones (H2A, H2B, H3 and H4). Histone deacetylation plays an important role in transcriptional regulation, cell cycle progression and developmental events. Histone deacetylases act via the formation of large multiprotein complexes. This chain is Type-1 histone deacetylase 1 (hdaA), found in Dictyostelium discoideum (Social amoeba).